The chain runs to 28 residues: MIRQKIFVFIVKSRRNSICPAIRRKEDY.

This is an uncharacterized protein from Saccharomyces cerevisiae (strain ATCC 204508 / S288c) (Baker's yeast).